Here is a 308-residue protein sequence, read N- to C-terminus: Putative lipid kinase SH2167 (308 aa).

The region spanning 1 to 139 (MGQKFNHGVL…YDVMKVNGTY (139 aa)) is the DAGKc domain. ATP contacts are provided by residues S44, 74–80 (GDGTVNE), and T101. Residues S220, D223, and K225 each contribute to the Mg(2+) site. The active-site Proton acceptor is the E281.

It belongs to the diacylglycerol/lipid kinase family. Mg(2+) serves as cofactor.

In terms of biological role, may catalyze the ATP-dependent phosphorylation of lipids other than diacylglycerol (DAG). The sequence is that of Putative lipid kinase SH2167 from Staphylococcus haemolyticus (strain JCSC1435).